Reading from the N-terminus, the 30-residue chain is EDDHDHHHHHHHHHHHHGVGGGGGGGGGGA.

Residues 1 to 18 show a composition bias toward basic residues; the sequence is EDDHDHHHHHHHHHHHHG. Residues 1–30 form a disordered region; that stretch reads EDDHDHHHHHHHHHHHHGVGGGGGGGGGGA. Residues 19–30 are compositionally biased toward gly residues; sequence VGGGGGGGGGGA.

Expressed by the venom gland.

Its subcellular location is the secreted. Functionally, may serve as a metalloproteinase inhibitor during glandular storage. Their inhibition may be instantly disengaged, by dilution or physiochemical change, when venom is injected into tissue of the victim. The polypeptide is Poly-His-poly-Gly peptide 2 (Atheris nitschei (Great lakes bush viper)).